The following is a 419-amino-acid chain: Effector protein BipC (419 aa).

2 disordered regions span residues 62–91 and 338–402; these read VAGSGAQRVELARPKPDAQTRATDRRTVSG and LQSG…AKSQ. 2 stretches are compositionally biased toward basic and acidic residues: residues 71–91 and 380–392; these read ELARPKPDAQTRATDRRTVSG and TRDEAAHRSREAA.

This sequence belongs to the SctB/SipC family.

The protein localises to the secreted. This chain is Effector protein BipC (bipC), found in Burkholderia mallei (strain NCTC 10247).